Consider the following 689-residue polypeptide: Transcription factor MYC2 (689 aa).

Residues 94 to 172 (LQQRLQALID…VLRELNSLIS (79 aa)) form a JAZ-interaction domain region. The span at 316–349 (NTVQTNSVPSSNSNKQIAYGNENNHPSGNGQSCY) shows a compositional bias: polar residues. Disordered stretches follow at residues 316–361 (NTVQ…PQQQ) and 420–519 (QSQF…EAER). Positions 350-361 (NQQQQKNPPQQQ) are enriched in low complexity. Positions 471–495 (DSEHSDLEASVVKEADSSRVVEPEK) are enriched in basic and acidic residues. Over residues 496-505 (RPRKRGRKPA) the composition is skewed to basic residues. Positions 506 to 519 (NGREEPLNHVEAER) are enriched in basic and acidic residues. The segment at 509–522 (EEPLNHVEAERQRR) is basic motif; degenerate. Positions 509–558 (EEPLNHVEAERQRREKLNQRFYALRAVVPNVSKMDKASLLGDAISYINEL) constitute a bHLH domain. The tract at residues 523 to 558 (EKLNQRFYALRAVVPNVSKMDKASLLGDAISYINEL) is helix-loop-helix motif. The segment at 563–602 (QNTESDKEDLKSQIEDLKKESRRPGPPPPPNQDLKMSSHT) is disordered. The segment covering 566–585 (ESDKEDLKSQIEDLKKESRR) has biased composition (basic and acidic residues).

Interacts (via N-terminus) with MED25. Interacts (via N-terminus) with JAZ7. MED25 and JAZ7 compete with each other to bind to MYC2. Interacts (via N-terminus) with MTB1. MTB1 and MED25 compete with each other to bind to MYC2. In terms of tissue distribution, expressed at low levels in roots, stems, leaves, flowers and fruits.

The protein resides in the nucleus. Functionally, transcriptional activator that binds to the G-box motif (5'-AACGTG-3') found in the promoter of the jasmonate-induced gene LAPA1. Acts as a negative regulator of blue light-mediated photomorphogenesis and positively regulates root growth. Promotes growth in response to the phytohormones abscisic acid (ABA) and jasmonate (JA). Binds to the G-box motif (5'-CACGTG-3') of the RBCS-3A gene promoter. Acts downstream of the jasmonate (JA) receptor to orchestrate JA-mediated activation of plant responses. Positively regulates both wound-responsive and pathogen-responsive genes through MYC2-targeted transcription factors (MTFs) involved in early response to JA. With JA2L forms a transcription module that regulates wounding-responsive genes. With ERF.C3 forms a transcription module that regulates pathogen-responsive genes. Plays a critical role in orchestrating JA-mediated defense gene expression during Botrytis cinerea infection. Negatively regulates defense responses to root-knot nematodes, potentially by mediating crosstalk among the hormones strigolactones, abscisic acid (ABA) and jasmonate (JA). Regulates the termination of JA-mediated defense responses by specifically binding the G-box (5'-CACATG-3') motifs in the promoters of MTB1, MTB2 and MTB3, which are transcription factors that negatively regulates JA signaling. May be involved in JA-induced chilling tolerance, possibly by ameliorating the antioxidant enzyme system of fruit and increasing proline and lycopene levels. This Solanum lycopersicum (Tomato) protein is Transcription factor MYC2.